The following is a 256-amino-acid chain: 6-carboxyhexanoate--CoA ligase (256 aa).

It belongs to the BioW family. As to quaternary structure, homodimer. Mg(2+) is required as a cofactor.

It carries out the reaction heptanedioate + ATP + CoA = 6-carboxyhexanoyl-CoA + AMP + diphosphate. It functions in the pathway metabolic intermediate metabolism; pimeloyl-CoA biosynthesis; pimeloyl-CoA from pimelate: step 1/1. In terms of biological role, catalyzes the transformation of pimelate into pimeloyl-CoA with concomitant hydrolysis of ATP to AMP. This Methanobrevibacter ruminantium (strain ATCC 35063 / DSM 1093 / JCM 13430 / OCM 146 / M1) (Methanobacterium ruminantium) protein is 6-carboxyhexanoate--CoA ligase.